The chain runs to 389 residues: Lipid-A-disaccharide synthase (389 aa).

Belongs to the LpxB family.

The catalysed reaction is a lipid X + a UDP-2-N,3-O-bis[(3R)-3-hydroxyacyl]-alpha-D-glucosamine = a lipid A disaccharide + UDP + H(+). It participates in bacterial outer membrane biogenesis; LPS lipid A biosynthesis. In terms of biological role, condensation of UDP-2,3-diacylglucosamine and 2,3-diacylglucosamine-1-phosphate to form lipid A disaccharide, a precursor of lipid A, a phosphorylated glycolipid that anchors the lipopolysaccharide to the outer membrane of the cell. This Histophilus somni (strain 2336) (Haemophilus somnus) protein is Lipid-A-disaccharide synthase.